Consider the following 407-residue polypeptide: Probable tRNA sulfurtransferase (407 aa).

Residues 61 to 165 form the THUMP domain; sequence NEITYRLSKI…LDAIYMYEEV (105 aa). Residues 183-184, 208-209, R265, G287, and Q296 each bind ATP; these read ML and HF.

It belongs to the ThiI family.

It is found in the cytoplasm. The enzyme catalyses [ThiI sulfur-carrier protein]-S-sulfanyl-L-cysteine + a uridine in tRNA + 2 reduced [2Fe-2S]-[ferredoxin] + ATP + H(+) = [ThiI sulfur-carrier protein]-L-cysteine + a 4-thiouridine in tRNA + 2 oxidized [2Fe-2S]-[ferredoxin] + AMP + diphosphate. The catalysed reaction is [ThiS sulfur-carrier protein]-C-terminal Gly-Gly-AMP + S-sulfanyl-L-cysteinyl-[cysteine desulfurase] + AH2 = [ThiS sulfur-carrier protein]-C-terminal-Gly-aminoethanethioate + L-cysteinyl-[cysteine desulfurase] + A + AMP + 2 H(+). It participates in cofactor biosynthesis; thiamine diphosphate biosynthesis. Its function is as follows. Catalyzes the ATP-dependent transfer of a sulfur to tRNA to produce 4-thiouridine in position 8 of tRNAs, which functions as a near-UV photosensor. Also catalyzes the transfer of sulfur to the sulfur carrier protein ThiS, forming ThiS-thiocarboxylate. This is a step in the synthesis of thiazole, in the thiamine biosynthesis pathway. The sulfur is donated as persulfide by IscS. This chain is Probable tRNA sulfurtransferase, found in Staphylococcus aureus (strain Mu3 / ATCC 700698).